The following is a 129-amino-acid chain: Ribulose bisphosphate carboxylase small subunit (129 aa).

Residues 109–129 (LRMTRTESNGRSQHYMWETQR) form a disordered region.

It belongs to the RuBisCO small chain family. In terms of assembly, heterohexadecamer of 8 large and 8 small subunits.

Functionally, ruBisCO catalyzes two reactions: the carboxylation of D-ribulose 1,5-bisphosphate, the primary event in carbon dioxide fixation, as well as the oxidative fragmentation of the pentose substrate. Both reactions occur simultaneously and in competition at the same active site. Although the small subunit is not catalytic it is essential for maximal activity. The protein is Ribulose bisphosphate carboxylase small subunit of Rhizobium meliloti (strain 1021) (Ensifer meliloti).